A 39-amino-acid polypeptide reads, in one-letter code: Potassium channel toxin alpha-KTx 2.9 (39 aa).

3 cysteine pairs are disulfide-bonded: Cys7-Cys29, Cys13-Cys34, and Cys17-Cys36. The residue at position 39 (Asn39) is an Asparagine amide.

This sequence belongs to the short scorpion toxin superfamily. Potassium channel inhibitor family. Alpha-KTx 02 subfamily. In terms of tissue distribution, expressed by the venom gland.

It localises to the secreted. In terms of biological role, blocks Kv1.3/KCNA3 voltage-gated potassium channels of human T-lymphocytes (Kd=0.25 nM). In Centruroides elegans (Bark scorpion), this protein is Potassium channel toxin alpha-KTx 2.9.